The following is a 144-amino-acid chain: MLVPKRVKYRREFRGNMRGRAKGGTEVAFGEYGLQAVEASWITNRQIEAARIAMTRYMKRGGKVWIKIFPHKSYTSKPIGVRMGKGKGAPEGWVSPVKRGKIMFEIAGVPEDVAREALRLAAHKLPVKTKIVKREEIGGEANES.

This sequence belongs to the universal ribosomal protein uL16 family. As to quaternary structure, part of the 50S ribosomal subunit.

Its function is as follows. Binds 23S rRNA and is also seen to make contacts with the A and possibly P site tRNAs. The sequence is that of Large ribosomal subunit protein uL16 from Listeria innocua serovar 6a (strain ATCC BAA-680 / CLIP 11262).